A 412-amino-acid chain; its full sequence is Acetate kinase (412 aa).

Asparagine 10 provides a ligand contact to Mg(2+). Position 17 (lysine 17) interacts with ATP. The disordered stretch occupies residues 40 to 61 (ETSRLAHTPSAGGGAEPRERTG). Position 95 (arginine 95) interacts with substrate. Aspartate 152 (proton donor/acceptor) is an active-site residue. ATP is bound by residues 212 to 216 (HLGNG), 286 to 288 (DMR), and 334 to 338 (GVGEN). Glutamate 388 is a Mg(2+) binding site.

Belongs to the acetokinase family. In terms of assembly, homodimer. It depends on Mg(2+) as a cofactor. Mn(2+) serves as cofactor.

Its subcellular location is the cytoplasm. The catalysed reaction is acetate + ATP = acetyl phosphate + ADP. Its pathway is metabolic intermediate biosynthesis; acetyl-CoA biosynthesis; acetyl-CoA from acetate: step 1/2. Catalyzes the formation of acetyl phosphate from acetate and ATP. Can also catalyze the reverse reaction. The polypeptide is Acetate kinase (Streptomyces griseus subsp. griseus (strain JCM 4626 / CBS 651.72 / NBRC 13350 / KCC S-0626 / ISP 5235)).